The chain runs to 546 residues: Probable protein kinase UbiB (546 aa).

The 379-residue stretch at 123 to 501 (DFDETPLASA…SRRQGQARYL (379 aa)) folds into the Protein kinase domain. ATP contacts are provided by residues 129–137 (LASASIAQV) and Lys152. The active-site Proton acceptor is Asp287. Transmembrane regions (helical) follow at residues 496 to 516 (GQARYLLGVGASLLLVGVFLL) and 521 to 541 (HIEWGQISLAGAGLCWLLGWF).

This sequence belongs to the ABC1 family. UbiB subfamily.

The protein resides in the cell inner membrane. Its pathway is cofactor biosynthesis; ubiquinone biosynthesis [regulation]. In terms of biological role, is probably a protein kinase regulator of UbiI activity which is involved in aerobic coenzyme Q (ubiquinone) biosynthesis. This Aeromonas salmonicida (strain A449) protein is Probable protein kinase UbiB.